We begin with the raw amino-acid sequence, 248 residues long: UPF0736 protein BCB4264_A1231 (248 aa).

The protein belongs to the UPF0736 family.

The polypeptide is UPF0736 protein BCB4264_A1231 (Bacillus cereus (strain B4264)).